The chain runs to 57 residues: Potassium channel toxin alpha-KTx 4.2 (57 aa).

A signal peptide spans 1-20 (MKVLYGILIIFILCSMFYLS). A propeptide spans 21-22 (QE) (removed by a carboxypeptidase). Intrachain disulfides connect cysteine 29–cysteine 50, cysteine 35–cysteine 55, and cysteine 39–cysteine 57.

The protein belongs to the short scorpion toxin superfamily. Potassium channel inhibitor family. Alpha-KTx 04 subfamily. As to expression, expressed by the venom gland.

It is found in the secreted. Its function is as follows. Blocker for small-conductance calcium-activated potassium channels KCa2.2/KCNN2 (Kd=80 nM) and KCa2.3/KCNN3 (Kd=197 nM) and ERG1/Kv11.1/KCNH2 potassium channels (53% inhibition at 5 uM). Has also been shown to inhibit Kv1.1/KCNA1 and Nav1.7/SCN9A with a moderate potency, as well as Kv11.1/KCNH2/ERG1 and Kv1.2/KCNA2 with a low potency. The polypeptide is Potassium channel toxin alpha-KTx 4.2 (Tityus serrulatus (Brazilian scorpion)).